The following is a 486-amino-acid chain: Pup--protein ligase (486 aa).

A Mg(2+)-binding site is contributed by E33. R76 contributes to the ATP binding site. Y78 contributes to the Mg(2+) binding site. The active-site Proton acceptor is D80. E86 is a Mg(2+) binding site. Residues T89 and W451 each contribute to the ATP site.

Belongs to the Pup ligase/Pup deamidase family. Pup-conjugating enzyme subfamily.

It carries out the reaction ATP + [prokaryotic ubiquitin-like protein]-L-glutamate + [protein]-L-lysine = ADP + phosphate + N(6)-([prokaryotic ubiquitin-like protein]-gamma-L-glutamyl)-[protein]-L-lysine.. It participates in protein degradation; proteasomal Pup-dependent pathway. It functions in the pathway protein modification; protein pupylation. In terms of biological role, catalyzes the covalent attachment of the prokaryotic ubiquitin-like protein modifier Pup to the proteasomal substrate proteins, thereby targeting them for proteasomal degradation. This tagging system is termed pupylation. The ligation reaction involves the side-chain carboxylate of the C-terminal glutamate of Pup and the side-chain amino group of a substrate lysine. The polypeptide is Pup--protein ligase (Bifidobacterium longum (strain DJO10A)).